Consider the following 337-residue polypeptide: Glycerol-3-phosphate dehydrogenase [NAD(P)+] 2 (337 aa).

3 residues coordinate NADPH: threonine 11, tryptophan 12, and lysine 105. Positions 105, 139, and 141 each coordinate sn-glycerol 3-phosphate. NADPH is bound at residue alanine 143. Positions 194, 247, 257, 258, and 259 each coordinate sn-glycerol 3-phosphate. Lysine 194 acts as the Proton acceptor in catalysis. Arginine 258 lines the NADPH pocket. Positions 282 and 284 each coordinate NADPH.

This sequence belongs to the NAD-dependent glycerol-3-phosphate dehydrogenase family.

The protein localises to the cytoplasm. It carries out the reaction sn-glycerol 3-phosphate + NAD(+) = dihydroxyacetone phosphate + NADH + H(+). The catalysed reaction is sn-glycerol 3-phosphate + NADP(+) = dihydroxyacetone phosphate + NADPH + H(+). It functions in the pathway membrane lipid metabolism; glycerophospholipid metabolism. Its function is as follows. Catalyzes the reduction of the glycolytic intermediate dihydroxyacetone phosphate (DHAP) to sn-glycerol 3-phosphate (G3P), the key precursor for phospholipid synthesis. This Lactobacillus delbrueckii subsp. bulgaricus (strain ATCC 11842 / DSM 20081 / BCRC 10696 / JCM 1002 / NBRC 13953 / NCIMB 11778 / NCTC 12712 / WDCM 00102 / Lb 14) protein is Glycerol-3-phosphate dehydrogenase [NAD(P)+] 2.